The sequence spans 538 residues: Phosphoenolpyruvate carboxykinase (ATP) (538 aa).

Arg64 contributes to the substrate binding site. Arg152 serves as a coordination point for ATP. 2 residues coordinate substrate: Tyr205 and Lys211. ATP contacts are provided by residues Lys211, His230, and 246-254 (GLSGTGKTT). Residues Lys211 and His230 each coordinate Mn(2+). Asp267 is a binding site for Mn(2+). ATP is bound by residues Glu295, Arg331, Arg344, 447-448 (RI), and Thr453. Substrate is bound at residue Arg331.

The protein belongs to the phosphoenolpyruvate carboxykinase (ATP) family. In terms of assembly, monomer. Mn(2+) is required as a cofactor.

It is found in the cytoplasm. It catalyses the reaction oxaloacetate + ATP = phosphoenolpyruvate + ADP + CO2. The protein operates within carbohydrate biosynthesis; gluconeogenesis. Its function is as follows. Involved in gluconeogenesis. Catalyzes the conversion of oxaloacetate (OAA) to phosphoenolpyruvate (PEP) through direct phosphoryl transfer between the nucleoside triphosphate and OAA. The chain is Phosphoenolpyruvate carboxykinase (ATP) from Actinobacillus succinogenes (strain ATCC 55618 / DSM 22257 / CCUG 43843 / 130Z).